Consider the following 305-residue polypeptide: Putative lipid kinase SAB0675c (305 aa).

The DAGKc domain maps to N3 to Y139. ATP-binding positions include S44, G74–E80, and T101. Mg(2+)-binding residues include S220, D223, and E225. The active-site Proton acceptor is the E281.

Belongs to the diacylglycerol/lipid kinase family. It depends on Mg(2+) as a cofactor.

In terms of biological role, may catalyze the ATP-dependent phosphorylation of lipids other than diacylglycerol (DAG). The protein is Putative lipid kinase SAB0675c of Staphylococcus aureus (strain bovine RF122 / ET3-1).